Consider the following 137-residue polypeptide: Small ribosomal subunit protein uS13 (137 aa).

A disordered region spans residues 114–137 (VTQKNARTRKGPRKTIMAKKDKGK). Positions 119-130 (ARTRKGPRKTIM) are enriched in basic residues.

It belongs to the universal ribosomal protein uS13 family. In terms of assembly, part of the 30S ribosomal subunit. Forms a loose heterodimer with protein S19. Forms two bridges to the 50S subunit in the 70S ribosome.

Functionally, located at the top of the head of the 30S subunit, it contacts several helices of the 16S rRNA. In the 70S ribosome it contacts the 23S rRNA (bridge B1a) and protein L5 of the 50S subunit (bridge B1b), connecting the 2 subunits; these bridges are implicated in subunit movement. Contacts the tRNAs in the A and P-sites. This is Small ribosomal subunit protein uS13 from Mesomycoplasma hyopneumoniae (strain 232) (Mycoplasma hyopneumoniae).